A 279-amino-acid polypeptide reads, in one-letter code: S-formylglutathione hydrolase (279 aa).

Residues serine 150, aspartate 226, and histidine 258 each act as charge relay system in the active site.

It belongs to the esterase D family.

It carries out the reaction S-formylglutathione + H2O = formate + glutathione + H(+). Its function is as follows. Serine hydrolase involved in the detoxification of formaldehyde. Hydrolyzes S-formylglutathione to glutathione and formate. The polypeptide is S-formylglutathione hydrolase (fghA) (Paracoccus denitrificans (strain Pd 1222)).